A 235-amino-acid polypeptide reads, in one-letter code: NAD(P)H-quinone oxidoreductase subunit K (235 aa).

[4Fe-4S] cluster-binding residues include C52, C53, C117, and C148. The segment covering 216-226 (AGAAVAPQLPV) has biased composition (low complexity). The interval 216–235 (AGAAVAPQLPVTEKEGRDRA) is disordered.

It belongs to the complex I 20 kDa subunit family. In terms of assembly, NDH-1 can be composed of about 15 different subunits; different subcomplexes with different compositions have been identified which probably have different functions. [4Fe-4S] cluster serves as cofactor.

Its subcellular location is the cellular thylakoid membrane. The enzyme catalyses a plastoquinone + NADH + (n+1) H(+)(in) = a plastoquinol + NAD(+) + n H(+)(out). The catalysed reaction is a plastoquinone + NADPH + (n+1) H(+)(in) = a plastoquinol + NADP(+) + n H(+)(out). Functionally, NDH-1 shuttles electrons from an unknown electron donor, via FMN and iron-sulfur (Fe-S) centers, to quinones in the respiratory and/or the photosynthetic chain. The immediate electron acceptor for the enzyme in this species is believed to be plastoquinone. Couples the redox reaction to proton translocation, and thus conserves the redox energy in a proton gradient. Cyanobacterial NDH-1 also plays a role in inorganic carbon-concentration. In Synechococcus elongatus (strain ATCC 33912 / PCC 7942 / FACHB-805) (Anacystis nidulans R2), this protein is NAD(P)H-quinone oxidoreductase subunit K.